The following is a 153-amino-acid chain: MKCPFCGHLEDRVIDSRAGGAGEVIRRRRECASCERRFTTYERVEDILPTVVKKDGRRESFDRQKLVRGLRIACNKRPVSTDQIEAIADAIEREAQESERREILSTELGERVMNHLRTLDEVAYVRFASVYRSFRDIDQFMVELGKLVKAKAP.

The segment at 3 to 34 is a zinc-finger region; sequence CPFCGHLEDRVIDSRAGGAGEVIRRRRECASC. The ATP-cone domain occupies 49-139; that stretch reads PTVVKKDGRR…VYRSFRDIDQ (91 aa).

Belongs to the NrdR family. It depends on Zn(2+) as a cofactor.

Its function is as follows. Negatively regulates transcription of bacterial ribonucleotide reductase nrd genes and operons by binding to NrdR-boxes. In Sorangium cellulosum (strain So ce56) (Polyangium cellulosum (strain So ce56)), this protein is Transcriptional repressor NrdR.